A 307-amino-acid chain; its full sequence is Ribosomal RNA small subunit methyltransferase H (307 aa).

Residues Gly32–His34, Asp52, Phe78, Asp99, and Gln106 contribute to the S-adenosyl-L-methionine site.

This sequence belongs to the methyltransferase superfamily. RsmH family.

The protein resides in the cytoplasm. It carries out the reaction cytidine(1402) in 16S rRNA + S-adenosyl-L-methionine = N(4)-methylcytidine(1402) in 16S rRNA + S-adenosyl-L-homocysteine + H(+). Functionally, specifically methylates the N4 position of cytidine in position 1402 (C1402) of 16S rRNA. This chain is Ribosomal RNA small subunit methyltransferase H, found in Acinetobacter baumannii (strain SDF).